Here is a 289-residue protein sequence, read N- to C-terminus: MKTLYILDGSSFVYRSFFALPPLSTSKGFPTNAIYGFLRMLFSLIKKERPQYLVVVFDAPAKTKREKIYADYKKQRPKAPDPLKVQIPVIKEILKLAGIPLLELPGYEADDVIAYLAEKFSQKGFKVKIYSPDKDLLQLVSENVLVINPMNDEVFTKERVIKKFGVEPQKIPDYLALVGDKVDNVPGIEGVGPKTAINILKKYGSVENILKNWEKFQREFPRAKKEDLELSYKLVKLYTDLDIELSEEDLKIKRPDLNKLKQKLQELEMKSLLKEVDKIFRQASQRSLF.

Residues 166-256 form the 5'-3' exonuclease domain; that stretch reads VEPQKIPDYL…EEDLKIKRPD (91 aa).

In terms of biological role, 5'-3' exonuclease acting preferentially on double-stranded DNA. This chain is 5'-3' exonuclease, found in Aquifex aeolicus (strain VF5).